Reading from the N-terminus, the 1331-residue chain is DNA replication ATP-dependent helicase/nuclease JHS1 (1331 aa).

Residues 1 to 98 (MPPRKKPKSS…DMDQQLTEAS (98 aa)) form a disordered region. The Nuclear localization signal signature appears at 2–8 (PPRKKPK). The segment covering 11–31 (ALKSNKQSSANHSSQPSTFGI) has biased composition (polar residues). Residues 40-52 (QNSQSTSNSHTST) show a composition bias toward low complexity. The segment covering 57–81 (DQQNVNGLASDTAVLTPQNPLGTSN) has biased composition (polar residues). Residues 82-91 (EKPDESKDMD) show a composition bias toward basic and acidic residues. The interval 362–811 (ECALYLWDEW…CKLRTGDRVI (450 aa)) is nuclease activity. Positions 422, 666, 669, and 675 each coordinate [4Fe-4S] cluster. A helicase activity region spans residues 812–1331 (LRTEVSHLTV…LNLLPGDLKP (520 aa)). The UvrD-like helicase ATP-binding domain maps to 924–1271 (NNDQRQAILK…VRSREKPRSS (348 aa)). 945 to 952 (GMPGTGKT) is an ATP binding site.

The protein belongs to the DNA2/NAM7 helicase family. [4Fe-4S] cluster serves as cofactor. In terms of tissue distribution, strongly expressed in meristems, including both root and shoot apical meristems (RAM and SAM). Also present in the vasculature and in young floral tissues.

It is found in the nucleus. The protein localises to the chromosome. The catalysed reaction is ATP + H2O = ADP + phosphate + H(+). In terms of biological role, essential protein required during embryogenesis. Key enzyme involved in DNA replication and damage repair, shoot apical meristem (SAM) maintenance, and development. Involved in Okazaki fragments processing. Possesses different enzymatic activities, such as single-stranded DNA (ssDNA)-dependent ATPase, 5'-3' helicase and endonuclease activities. While the ATPase and endonuclease activities are well-defined and play a key role in Okazaki fragments processing and DSB repair, the 5'-3' DNA helicase activity is atypical: it cannot load onto its tracking strand internally and has an absolute free 5'-end requirement. The polypeptide is DNA replication ATP-dependent helicase/nuclease JHS1 (Arabidopsis thaliana (Mouse-ear cress)).